The following is a 197-amino-acid chain: Suppressor of RNA silencing p3 (197 aa).

Belongs to the tenuiviruses p3 protein family. Homodimer.

It is found in the host cytoplasm. Functionally, acts as a suppressor of RNA-mediated gene silencing, also known as post-transcriptional gene silencing (PTGS), presumably through the binding of dsRNA. The chain is Suppressor of RNA silencing p3 from Rottboellia (Sorghum).